The primary structure comprises 430 residues: Tol-Pal system protein TolB (430 aa).

The N-terminal stretch at 1-26 (MSLMTKLGLRTLVASCLIAVGGAAHA) is a signal peptide.

This sequence belongs to the TolB family. The Tol-Pal system is composed of five core proteins: the inner membrane proteins TolA, TolQ and TolR, the periplasmic protein TolB and the outer membrane protein Pal. They form a network linking the inner and outer membranes and the peptidoglycan layer.

It is found in the periplasm. In terms of biological role, part of the Tol-Pal system, which plays a role in outer membrane invagination during cell division and is important for maintaining outer membrane integrity. This chain is Tol-Pal system protein TolB, found in Paraburkholderia phytofirmans (strain DSM 17436 / LMG 22146 / PsJN) (Burkholderia phytofirmans).